The chain runs to 194 residues: Cysteine and glycine-rich protein 3 (194 aa).

Residues 1–5 form an interaction with TCAP region; it reads MPNWG. The 52-residue stretch at 10-61 folds into the LIM zinc-binding 1 domain; it reads CGACEKTVYHAEEIQCNGRSFHKTCFHCMACRKALDSTTVAAHESEIYCKVC. The Nuclear localization signal signature appears at 64 to 69; that stretch reads RRYGPK. The interval 94–105 is interaction with CLF2; the sequence is QSPKPARAATTS. A phosphoserine mark is found at Ser-95, Ser-111, and Ser-153. In terms of domain architecture, LIM zinc-binding 2 spans 120 to 171; it reads CPRCGKSVYAAEKVMGGGKPWHKTCFRCAICGKSLESTNVTDKDGELYCKVC.

In terms of assembly, self-associates. Oligomeric in the cytoplasm and monomeric in the nucleus. Homooligomers preferentially form along the actin cytoskeleton. Interacts with TCAP. Interacts with LDHD, MYOD1, MYOG, ACTN2, NRAP, MYF6. Interacts (via N-terminus)D with GLRX3 (via C-terminus) and PPP3CA; GLRX3 and calcineurin compete for interaction with CSRP3. Interacts with CFL2; the stoichiometry influences F-actin depolymerization and possibly two molecules of CFL2 can interact with one molecule of CSRP3 resulting in the highest functional impact; the interaction is stronger with phosphorylated CFL2. In terms of processing, phosphorylated by PKC/PRKCA.

Its subcellular location is the nucleus. The protein localises to the cytoplasm. The protein resides in the cytoskeleton. It localises to the myofibril. It is found in the sarcomere. Its subcellular location is the z line. Its function is as follows. Positive regulator of myogenesis. Acts as a cofactor for myogenic bHLH transcription factors such as MYOD1, and probably MYOG and MYF6. Enhances the DNA-binding activity of the MYOD1:TCF3 isoform E47 complex and may promote formation of a functional MYOD1:TCF3 isoform E47:MEF2A complex involved in myogenesis. Plays a crucial and specific role in the organization of cytosolic structures in cardiomyocytes. Could play a role in mechanical stretch sensing. May be a scaffold protein that promotes the assembly of interacting proteins at Z-line structures. It is essential for calcineurin anchorage to the Z line. Required for stress-induced calcineurin-NFAT activation. The role in regulation of cytoskeleton dynamics by association with CFL2 is reported conflictingly. Proposed to contribute to the maintenance of muscle cell integrity through an actin-based mechanism. Can directly bind to actin filaments, cross-link actin filaments into bundles without polarity selectivity and protect them from dilution- and cofilin-mediated depolymerization; the function seems to involve its self-association. In vitro can inhibit PKC/PRKCA activity. Proposed to be involved in cardiac stress signaling by down-regulating excessive PKC/PRKCA signaling. The sequence is that of Cysteine and glycine-rich protein 3 (Csrp3) from Mus musculus (Mouse).